The primary structure comprises 299 residues: Regucalcin (299 aa).

Glu18 serves as a coordination point for a divalent metal cation. 3 residues coordinate substrate: Arg101, Asn103, and Glu121. The a divalent metal cation site is built by Asn154 and Asp204. Asp204 serves as the catalytic Proton donor/acceptor.

The protein belongs to the SMP-30/CGR1 family. Zn(2+) is required as a cofactor. Mn(2+) serves as cofactor. Requires Ca(2+) as cofactor. The cofactor is Mg(2+).

The protein resides in the cytoplasm. It carries out the reaction D-glucono-1,5-lactone + H2O = D-gluconate + H(+). Its pathway is cofactor biosynthesis; L-ascorbate biosynthesis via UDP-alpha-D-glucuronate pathway; L-ascorbate from UDP-alpha-D-glucuronate: step 3/4. In terms of biological role, gluconolactonase with low activity towards other sugar lactones, including gulonolactone and galactonolactone. Catalyzes a key step in ascorbic acid (vitamin C) biosynthesis. Can also hydrolyze diisopropyl phosphorofluoridate and phenylacetate (in vitro). Calcium-binding protein. Modulates Ca(2+) signaling, and Ca(2+)-dependent cellular processes and enzyme activities. This chain is Regucalcin, found in Gallus gallus (Chicken).